Consider the following 107-residue polypeptide: Putative ankyrin repeat protein RP714 (107 aa).

ANK repeat units lie at residues 7 to 36 (PPLS…DIDV), 40 to 69 (NGNS…TIDA), and 73 to 102 (ELAT…NKSA).

This is Putative ankyrin repeat protein RP714 from Rickettsia prowazekii (strain Madrid E).